The following is a 322-amino-acid chain: 8-oxo-(d)GTP phosphatase (322 aa).

Residues 1–21 (MMPVDDLQEIPLSKDTTEKSK) form a disordered region. In terms of domain architecture, Nudix hydrolase spans 22–156 (HTVRAAGAVL…DDRKVLRRFV (135 aa)). Substrate contacts are provided by residues 55–58 (RPRY), Asp60, and 65–67 (KGK). Lys65, Glu81, and Glu85 together coordinate Mg(2+). The Nudix box signature appears at 66–87 (GKLDQGETEPVAAAREIHEETG). Positions 101, 108, 127, and 145 each coordinate substrate. Glu127 provides a ligand contact to Mg(2+).

This sequence belongs to the Nudix hydrolase family. As to quaternary structure, forms head-to-tail homodimers. Mg(2+) is required as a cofactor.

The catalysed reaction is 8-oxo-dGTP + H2O = 8-oxo-dGDP + phosphate + H(+). It carries out the reaction 8-oxo-GTP + H2O = 8-oxo-GDP + phosphate + H(+). It catalyses the reaction 8-oxo-dGDP + H2O = 8-oxo-dGMP + phosphate + H(+). The enzyme catalyses 8-oxo-GDP + H2O = 8-oxo-GMP + phosphate + H(+). The catalysed reaction is P(1),P(6)-bis(5'-adenosyl) hexaphosphate + H2O = 2 ATP + 2 H(+). It carries out the reaction P(1),P(5)-bis(5'-adenosyl) pentaphosphate + H2O = ADP + ATP + 2 H(+). It catalyses the reaction P(1),P(4)-bis(5'-adenosyl) tetraphosphate + H2O = AMP + ATP + 2 H(+). With respect to regulation, ap4A hydrolysis is inhibited by fluoride ions. In terms of biological role, catalyzes the conversion of 8-oxo-dGTP to 8-oxo-dGDP, and 8-oxo-GTP to 8-oxo-GDP. At high enzyme concentrations, can also catalyze the conversion of 8-oxo-dGDP to 8-oxo-dGMP, and 8-oxo-GDP to 8-oxo-GMP. In addition, catalyzes the hydrolysis of the diadenosine polyphosphates diadenosine hexaphosphate (Ap6A), diadenosine pentaphosphate (Ap5A) and diadenosine tetraphosphate (Ap4A). This chain is 8-oxo-(d)GTP phosphatase, found in Mycolicibacterium smegmatis (strain ATCC 700084 / mc(2)155) (Mycobacterium smegmatis).